A 202-amino-acid polypeptide reads, in one-letter code: Proteasome subunit beta 1 (202 aa).

A propeptide (removed in mature form; by autocatalysis) is located at residue M1. T2 (nucleophile) is an active-site residue.

The protein belongs to the peptidase T1B family. As to quaternary structure, the 20S proteasome core is composed of 14 alpha and 14 beta subunits that assemble into four stacked heptameric rings, resulting in a barrel-shaped structure. The two inner rings, each composed of seven catalytic beta subunits, are sandwiched by two outer rings, each composed of seven alpha subunits. The catalytic chamber with the active sites is on the inside of the barrel. Has a gated structure, the ends of the cylinder being occluded by the N-termini of the alpha-subunits. Is capped at one or both ends by the proteasome regulatory ATPase, PAN.

It is found in the cytoplasm. The enzyme catalyses Cleavage of peptide bonds with very broad specificity.. The formation of the proteasomal ATPase PAN-20S proteasome complex, via the docking of the C-termini of PAN into the intersubunit pockets in the alpha-rings, triggers opening of the gate for substrate entry. Interconversion between the open-gate and close-gate conformations leads to a dynamic regulation of the 20S proteasome proteolysis activity. Component of the proteasome core, a large protease complex with broad specificity involved in protein degradation. In Pyrobaculum aerophilum (strain ATCC 51768 / DSM 7523 / JCM 9630 / CIP 104966 / NBRC 100827 / IM2), this protein is Proteasome subunit beta 1.